A 710-amino-acid polypeptide reads, in one-letter code: Assimilatory nitrate reductase catalytic subunit (710 aa).

The region spanning 19 to 77 is the 4Fe-4S Mo/W bis-MGD-type domain; sequence EKTYDTQCPFCSMQCKMQLVEQTIVTRKKYTAIGIDNPTTQGRLCIKGMNAHQHALNSS. The [4Fe-4S] cluster site is built by Cys-26, Cys-29, Cys-33, and Cys-63.

This sequence belongs to the prokaryotic molybdopterin-containing oxidoreductase family. [4Fe-4S] cluster serves as cofactor. The cofactor is Mo-bis(molybdopterin guanine dinucleotide).

Its pathway is nitrogen metabolism; nitrate reduction (denitrification); dinitrogen from nitrate: step 1/4. In terms of biological role, nitrate reductase is a key enzyme involved in the first step of nitrate assimilation in plants, fungi and bacteria. The polypeptide is Assimilatory nitrate reductase catalytic subunit (nasC) (Bacillus subtilis (strain 168)).